We begin with the raw amino-acid sequence, 465 residues long: GTPase Der (465 aa).

2 consecutive EngA-type G domains span residues 3 to 166 and 184 to 358; these read FLVA…LNEY and IHFS…ACAN. GTP is bound by residues 9-16, 56-60, 118-121, 190-197, 237-241, and 302-305; these read GRANVGKS, DTGGI, NKVD, GRPNVGKS, DTAGV, and NKWD. The region spanning 359-443 is the KH-like domain; that stretch reads KKITTADATR…PIVFEFKQSE (85 aa). The disordered stretch occupies residues 446–465; it reads FADRKNKRSKDEGSKSKKVK.

It belongs to the TRAFAC class TrmE-Era-EngA-EngB-Septin-like GTPase superfamily. EngA (Der) GTPase family. In terms of assembly, associates with the 50S ribosomal subunit.

Functionally, GTPase that plays an essential role in the late steps of ribosome biogenesis. The chain is GTPase Der from Francisella tularensis subsp. tularensis (strain WY96-3418).